Here is a 172-residue protein sequence, read N- to C-terminus: Nicotinamide-nucleotide adenylyltransferase (172 aa).

Belongs to the archaeal NMN adenylyltransferase family.

It is found in the cytoplasm. It catalyses the reaction beta-nicotinamide D-ribonucleotide + ATP + H(+) = diphosphate + NAD(+). Its pathway is cofactor biosynthesis; NAD(+) biosynthesis; NAD(+) from nicotinamide D-ribonucleotide: step 1/1. This is Nicotinamide-nucleotide adenylyltransferase from Saccharolobus solfataricus (strain ATCC 35092 / DSM 1617 / JCM 11322 / P2) (Sulfolobus solfataricus).